The sequence spans 419 residues: UDP-N-acetylglucosamine 1-carboxyvinyltransferase (419 aa).

A phosphoenolpyruvate-binding site is contributed by 22 to 23 (KN). UDP-N-acetyl-alpha-D-glucosamine is bound at residue Arg-93. Cys-117 functions as the Proton donor in the catalytic mechanism. Cys-117 bears the 2-(S-cysteinyl)pyruvic acid O-phosphothioketal mark. UDP-N-acetyl-alpha-D-glucosamine is bound by residues Asp-306 and Ile-328.

Belongs to the EPSP synthase family. MurA subfamily.

It localises to the cytoplasm. It catalyses the reaction phosphoenolpyruvate + UDP-N-acetyl-alpha-D-glucosamine = UDP-N-acetyl-3-O-(1-carboxyvinyl)-alpha-D-glucosamine + phosphate. It functions in the pathway cell wall biogenesis; peptidoglycan biosynthesis. In terms of biological role, cell wall formation. Adds enolpyruvyl to UDP-N-acetylglucosamine. In Vesicomyosocius okutanii subsp. Calyptogena okutanii (strain HA), this protein is UDP-N-acetylglucosamine 1-carboxyvinyltransferase.